Reading from the N-terminus, the 240-residue chain is MARAAPPALLLPLLGLAAATAAAAAAAAAVGCPSSTWVQFQDSCYIFLQEAIKVESIEDVRNQCTDHGADMVSIHNEEENTFILETLKKQWKGPDDILLGMFFDTDDASFKWFDKSNMTFDKWSDQEDGEDLVDTCAFLHTKTGEWKKGNCEVSSVEGTLCKAAIPYEKKYLSDNHILISALVIASTVILTVLGAVIWFLYKRNLDSGFTTVFSTAPQSPFNDDCVLVVAEENEYAVQFD.

The C-type lectin domain occupies 40–160 (FQDSCYIFLQ…CEVSSVEGTL (121 aa)). Residue Asn-117 is glycosylated (N-linked (GlcNAc...) asparagine). Cysteines 136 and 151 form a disulfide. Residues 177 to 197 (ILISALVIASTVILTVLGAVI) traverse the membrane as a helical segment. Residues 198–240 (WFLYKRNLDSGFTTVFSTAPQSPFNDDCVLVVAEENEYAVQFD) lie on the Cytoplasmic side of the membrane.

It is found in the membrane. The protein localises to the cell projection. Its subcellular location is the filopodium. The protein resides in the cytoplasm. It localises to the cell cortex. Its function is as follows. Potential multifunctional C-type lectin receptor that may play roles in endocytosis and phagocytosis as well as in cell adhesion and migration. The polypeptide is CD302 antigen (Sus scrofa (Pig)).